We begin with the raw amino-acid sequence, 79 residues long: Small ribosomal subunit protein bS18 (79 aa).

Belongs to the bacterial ribosomal protein bS18 family. In terms of assembly, part of the 30S ribosomal subunit. Forms a tight heterodimer with protein bS6.

Its function is as follows. Binds as a heterodimer with protein bS6 to the central domain of the 16S rRNA, where it helps stabilize the platform of the 30S subunit. The chain is Small ribosomal subunit protein bS18 from Latilactobacillus sakei subsp. sakei (strain 23K) (Lactobacillus sakei subsp. sakei).